A 650-amino-acid chain; its full sequence is Replication protein E1 (650 aa).

Positions Lys84–Lys86 match the Nuclear localization signal motif. Phosphoserine; by host occurs at positions 90, 94, 108, and 121. A Nuclear export signal motif is present at residues Leu107–Ile116. Residues Thr187–Asp353 form a DNA-binding region region. Residues Val452–Leu602 form the SF3 helicase domain. Gly478–Ser485 lines the ATP pocket. Lys559 participates in a covalent cross-link: Glycyl lysine isopeptide (Lys-Gly) (interchain with G-Cter in SUMO).

The protein belongs to the papillomaviridae E1 protein family. As to quaternary structure, can form hexamers. Interacts with E2 protein; this interaction increases E1 DNA binding specificity. Interacts with host DNA polymerase subunit POLA2. Interacts with host single stranded DNA-binding protein RPA1. Interacts with host TOP1; this interaction stimulates the enzymatic activity of TOP1. Post-translationally, phosphorylated. Sumoylated.

It is found in the host nucleus. The catalysed reaction is Couples ATP hydrolysis with the unwinding of duplex DNA by translocating in the 3'-5' direction.. It catalyses the reaction ATP + H2O = ADP + phosphate + H(+). Its function is as follows. ATP-dependent DNA 3'-5' helicase required for initiation of viral DNA replication. It forms a complex with the viral E2 protein. The E1-E2 complex binds to the replication origin which contains binding sites for both proteins. During the initial step, a dimer of E1 interacts with a dimer of protein E2 leading to a complex that binds the viral origin of replication with high specificity. Then, a second dimer of E1 displaces the E2 dimer in an ATP-dependent manner to form the E1 tetramer. Following this, two E1 monomers are added to each half of the site, which results in the formation of two E1 trimers on the viral ori. Subsequently, two hexamers will be created. The double hexamer acts as a bi-directional helicase machinery and unwinds the viral DNA and then recruits the host DNA polymerase to start replication. This chain is Replication protein E1, found in Homo sapiens (Human).